The primary structure comprises 314 residues: ATP synthase gamma chain (314 aa).

This sequence belongs to the ATPase gamma chain family. As to quaternary structure, F-type ATPases have 2 components, CF(1) - the catalytic core - and CF(0) - the membrane proton channel. CF(1) has five subunits: alpha(3), beta(3), gamma(1), delta(1), epsilon(1). CF(0) has three main subunits: a, b and c.

Its subcellular location is the cellular thylakoid membrane. Functionally, produces ATP from ADP in the presence of a proton gradient across the membrane. The gamma chain is believed to be important in regulating ATPase activity and the flow of protons through the CF(0) complex. The polypeptide is ATP synthase gamma chain (Synechococcus sp. (strain JA-3-3Ab) (Cyanobacteria bacterium Yellowstone A-Prime)).